Here is a 311-residue protein sequence, read N- to C-terminus: Probable cobalamin biosynthesis protein CobD (311 aa).

Transmembrane regions (helical) follow at residues 53–73 (FIFG…AIYG), 76–96 (ILIN…FLIS), 157–177 (DSII…AFIY), and 288–308 (FSID…YVIF).

The protein belongs to the CobD/CbiB family.

The protein resides in the cell membrane. It functions in the pathway cofactor biosynthesis; adenosylcobalamin biosynthesis. In terms of biological role, converts cobyric acid to cobinamide by the addition of aminopropanol on the F carboxylic group. The sequence is that of Probable cobalamin biosynthesis protein CobD from Methanococcus aeolicus (strain ATCC BAA-1280 / DSM 17508 / OCM 812 / Nankai-3).